Here is a 193-residue protein sequence, read N- to C-terminus: Thymidine kinase (193 aa).

9-16 (AAMNAGKS) serves as a coordination point for ATP.

Belongs to the thymidine kinase family.

The enzyme catalyses thymidine + ATP = dTMP + ADP + H(+). This thymidine kinase is one of the enzymes that catalyze DNA precursor synthesis. Although tk is a nonessential gene, some strains of host E.coli do not support the growth of phages that lack this gene. This chain is Thymidine kinase (TK), found in Escherichia coli (Bacteriophage T4).